The chain runs to 20 residues: Short cationic peptide-3a (20 aa).

Glu-20 is modified (glutamic acid 1-amide).

As to expression, expressed by the venom gland.

The protein localises to the secreted. This Cupiennius salei (American wandering spider) protein is Short cationic peptide-3a.